The chain runs to 429 residues: Probable M18 family aminopeptidase 2 (429 aa).

Zn(2+) contacts are provided by His82, His156, and His401.

This sequence belongs to the peptidase M18 family. The cofactor is Zn(2+).

In Pseudomonas aeruginosa (strain UCBPP-PA14), this protein is Probable M18 family aminopeptidase 2.